We begin with the raw amino-acid sequence, 344 residues long: Phosphate acyltransferase (344 aa).

This sequence belongs to the PlsX family. In terms of assembly, homodimer. Probably interacts with PlsY.

It is found in the cytoplasm. It carries out the reaction a fatty acyl-[ACP] + phosphate = an acyl phosphate + holo-[ACP]. Its pathway is lipid metabolism; phospholipid metabolism. Catalyzes the reversible formation of acyl-phosphate (acyl-PO(4)) from acyl-[acyl-carrier-protein] (acyl-ACP). This enzyme utilizes acyl-ACP as fatty acyl donor, but not acyl-CoA. The protein is Phosphate acyltransferase of Sodalis glossinidius (strain morsitans).